The chain runs to 413 residues: 5'-deoxyadenosine deaminase (413 aa).

H57 and H59 together coordinate Zn(2+). Substrate-binding residues include E86 and H171. H198 contributes to the Zn(2+) binding site. The substrate site is built by E201 and D286. Zn(2+) is bound at residue D286.

Belongs to the metallo-dependent hydrolases superfamily. MTA/SAH deaminase family. As to quaternary structure, homotetramer. Zn(2+) is required as a cofactor.

It catalyses the reaction 5'-deoxyadenosine + H2O + H(+) = 5'-deoxyinosine + NH4(+). It carries out the reaction S-adenosyl-L-homocysteine + H2O + H(+) = S-inosyl-L-homocysteine + NH4(+). The enzyme catalyses S-methyl-5'-thioadenosine + H2O + H(+) = S-methyl-5'-thioinosine + NH4(+). The catalysed reaction is adenosine + H2O + H(+) = inosine + NH4(+). It participates in amino-acid biosynthesis; S-adenosyl-L-methionine biosynthesis. Functionally, catalyzes the deamination of three SAM-derived enzymatic products, namely 5'-deoxyadenosine, S-adenosyl-L-homocysteine, and 5'-methylthioadenosine, to produce the inosine analogs. Can also deaminate adenosine. The preferred substrate for this enzyme is 5'-deoxyadenosine, but all these substrates are efficiently deaminated. Likely functions in a S-adenosyl-L-methionine (SAM) recycling pathway from S-adenosyl-L-homocysteine (SAH) produced from SAM-dependent methylation reactions. May also be involved in the recycling of 5'-deoxyadenosine, whereupon the 5'-deoxyribose moiety of 5'-deoxyinosine is further metabolized to deoxyhexoses used for the biosynthesis of aromatic amino acids in methanogens. This Methanothrix thermoacetophila (strain DSM 6194 / JCM 14653 / NBRC 101360 / PT) (Methanosaeta thermophila) protein is 5'-deoxyadenosine deaminase.